The following is a 558-amino-acid chain: Dihydroxy-acid dehydratase (558 aa).

C54 serves as a coordination point for [2Fe-2S] cluster. D86 contacts Mg(2+). C127 is a binding site for [2Fe-2S] cluster. Positions 128 and 129 each coordinate Mg(2+). K129 is subject to N6-carboxylysine. C199 is a [2Fe-2S] cluster binding site. E448 lines the Mg(2+) pocket. S474 serves as the catalytic Proton acceptor.

The protein belongs to the IlvD/Edd family. Homodimer. [2Fe-2S] cluster is required as a cofactor. It depends on Mg(2+) as a cofactor.

It carries out the reaction (2R)-2,3-dihydroxy-3-methylbutanoate = 3-methyl-2-oxobutanoate + H2O. The enzyme catalyses (2R,3R)-2,3-dihydroxy-3-methylpentanoate = (S)-3-methyl-2-oxopentanoate + H2O. It functions in the pathway amino-acid biosynthesis; L-isoleucine biosynthesis; L-isoleucine from 2-oxobutanoate: step 3/4. It participates in amino-acid biosynthesis; L-valine biosynthesis; L-valine from pyruvate: step 3/4. Functionally, functions in the biosynthesis of branched-chain amino acids. Catalyzes the dehydration of (2R,3R)-2,3-dihydroxy-3-methylpentanoate (2,3-dihydroxy-3-methylvalerate) into 2-oxo-3-methylpentanoate (2-oxo-3-methylvalerate) and of (2R)-2,3-dihydroxy-3-methylbutanoate (2,3-dihydroxyisovalerate) into 2-oxo-3-methylbutanoate (2-oxoisovalerate), the penultimate precursor to L-isoleucine and L-valine, respectively. The polypeptide is Dihydroxy-acid dehydratase (Acidothermus cellulolyticus (strain ATCC 43068 / DSM 8971 / 11B)).